The sequence spans 129 residues: Histone H2A (129 aa).

Belongs to the histone H2A family. As to quaternary structure, the nucleosome is a histone octamer containing two molecules each of H2A, H2B, H3 and H4 assembled in one H3-H4 heterotetramer and two H2A-H2B heterodimers. The octamer wraps approximately 147 bp of DNA.

It is found in the nucleus. The protein resides in the chromosome. Functionally, core component of nucleosome. Nucleosomes wrap and compact DNA into chromatin, limiting DNA accessibility to the cellular machineries which require DNA as a template. Histones thereby play a central role in transcription regulation, DNA repair, DNA replication and chromosomal stability. DNA accessibility is regulated via a complex set of post-translational modifications of histones, also called histone code, and nucleosome remodeling. This chain is Histone H2A (H2A-II), found in Chlamydomonas reinhardtii (Chlamydomonas smithii).